Reading from the N-terminus, the 294-residue chain is MIDPMFRGVLPALVTPYRNGQVDEDAFVALVERQIAGGVHGLVPVGTTGESATLTHEEHRRVVELCVKTARGRVPVVAGAGSNSTAEAIELVRHAKTVGADAALVVTPYYNRPSQEGLYAHYRAINDAVQLPILVYNVPTRTSVDISNDVLVRLSKLPNVVGIKDATSDLVRASFQRLHCGEEWVMLSGDDPVALGYMAHGGHGCISVTANVAPEQCADFYNAALSGDWATALQWQDRLVRLHKALFADASPAPTKFALSHLGLCSEETRLPITPASEAARAEVLAAMRDAGLI.

T48 contacts pyruvate. Y136 serves as the catalytic Proton donor/acceptor. K164 serves as the catalytic Schiff-base intermediate with substrate. Residue I206 coordinates pyruvate.

Belongs to the DapA family. As to quaternary structure, homotetramer; dimer of dimers.

The protein localises to the cytoplasm. It catalyses the reaction L-aspartate 4-semialdehyde + pyruvate = (2S,4S)-4-hydroxy-2,3,4,5-tetrahydrodipicolinate + H2O + H(+). It functions in the pathway amino-acid biosynthesis; L-lysine biosynthesis via DAP pathway; (S)-tetrahydrodipicolinate from L-aspartate: step 3/4. Catalyzes the condensation of (S)-aspartate-beta-semialdehyde [(S)-ASA] and pyruvate to 4-hydroxy-tetrahydrodipicolinate (HTPA). In Phenylobacterium zucineum (strain HLK1), this protein is 4-hydroxy-tetrahydrodipicolinate synthase.